The chain runs to 1041 residues: Desmoglein-4 (1041 aa).

The first 23 residues, 1-23, serve as a signal peptide directing secretion; it reads MDWLLFRNICLLILFMVVLGVNS. Residues 24–49 constitute a propeptide that is removed on maturation; the sequence is EFIVEVKELDIENGTTTWQTVRRQKR. Cadherin domains lie at 50–157, 158–269, 270–385, and 389–497; these read EWIK…PPVF, TQNV…FPIL, EKTS…GPTF, and SMTF…CPVI. Residues 50–634 lie on the Extracellular side of the membrane; the sequence is EWIKFAAACR…RQSNVGLGPA (585 aa). Asn-110 is a glycosylation site (N-linked (GlcNAc...) asparagine). Asn-545 is a glycosylation site (N-linked (GlcNAc...) asparagine). Residues 635-655 form a helical membrane-spanning segment; that stretch reads GIGMIILGLLLLLLSPLLLLM. At 656-1041 the chain is on the cytoplasmic side; sequence CCCKRRQPEG…RYSNMHYSRQ (386 aa). 2 Desmoglein repeat repeats span residues 884 to 910 and 911 to 941; these read TLSE…IVTE and TYTT…ETVM. Residues 1014–1041 form a disordered region; that stretch reads ISQTTGSTSPMTSQHRVTRYSNMHYSRQ.

Interacts with JUP. In terms of tissue distribution, strongly expressed in the skin; during the anagen stage of hair follicles in the matrix, precortex and inner rooth sheath.

The protein resides in the cell membrane. It localises to the cell junction. Its subcellular location is the desmosome. Functionally, a component of desmosome cell-cell junctions which are required for positive regulation of cellular adhesion. Coordinates the transition from proliferation to differentiation in hair follicle keratinocytes. Plays a role in moderating lymphocyte migration to inflamed skin and maintaining homeostasis of the epidermal inflammatory response. The sequence is that of Desmoglein-4 (Dsg4) from Mus musculus (Mouse).